The primary structure comprises 622 residues: DNA-directed RNA polymerase subunit gamma (622 aa).

Cys-70, Cys-72, Cys-85, and Cys-88 together coordinate Zn(2+). The Mg(2+) site is built by Asp-466, Asp-468, and Asp-470.

It belongs to the RNA polymerase beta' chain family. RpoC1 subfamily. In terms of assembly, in cyanobacteria the RNAP catalytic core is composed of 2 alpha, 1 beta, 1 beta', 1 gamma and 1 omega subunit. When a sigma factor is associated with the core the holoenzyme is formed, which can initiate transcription. It depends on Mg(2+) as a cofactor. Requires Zn(2+) as cofactor.

It carries out the reaction RNA(n) + a ribonucleoside 5'-triphosphate = RNA(n+1) + diphosphate. Its function is as follows. DNA-dependent RNA polymerase catalyzes the transcription of DNA into RNA using the four ribonucleoside triphosphates as substrates. This Thermosynechococcus vestitus (strain NIES-2133 / IAM M-273 / BP-1) protein is DNA-directed RNA polymerase subunit gamma.